The following is a 130-amino-acid chain: Ribosome-binding factor A (130 aa).

It belongs to the RbfA family. As to quaternary structure, monomer. Binds 30S ribosomal subunits, but not 50S ribosomal subunits or 70S ribosomes.

It is found in the cytoplasm. In terms of biological role, one of several proteins that assist in the late maturation steps of the functional core of the 30S ribosomal subunit. Associates with free 30S ribosomal subunits (but not with 30S subunits that are part of 70S ribosomes or polysomes). Required for efficient processing of 16S rRNA. May interact with the 5'-terminal helix region of 16S rRNA. The sequence is that of Ribosome-binding factor A from Roseiflexus castenholzii (strain DSM 13941 / HLO8).